The following is a 136-amino-acid chain: Large ribosomal subunit protein uL16 (136 aa).

Belongs to the universal ribosomal protein uL16 family. As to quaternary structure, part of the 50S ribosomal subunit.

Its function is as follows. Binds 23S rRNA and is also seen to make contacts with the A and possibly P site tRNAs. In Shewanella halifaxensis (strain HAW-EB4), this protein is Large ribosomal subunit protein uL16.